A 409-amino-acid chain; its full sequence is Ribose-phosphate pyrophosphokinase 1 (409 aa).

Residues Asp-128, His-130, and Asp-143 each coordinate Mg(2+). A Phosphoserine modification is found at Ser-199.

This sequence belongs to the ribose-phosphate pyrophosphokinase family.

The protein localises to the cytoplasm. The catalysed reaction is D-ribose 5-phosphate + ATP = 5-phospho-alpha-D-ribose 1-diphosphate + AMP + H(+). It functions in the pathway metabolic intermediate biosynthesis; 5-phospho-alpha-D-ribose 1-diphosphate biosynthesis; 5-phospho-alpha-D-ribose 1-diphosphate from D-ribose 5-phosphate (route I): step 1/1. Functionally, 5-phosphoribose 1-diphosphate synthase involved in nucleotide, histidine, and tryptophan biosynthesis. Active in heteromultimeric complexes with other 5-phosphoribose 1-diphosphate synthases. The protein is Ribose-phosphate pyrophosphokinase 1 of Schizosaccharomyces pombe (strain 972 / ATCC 24843) (Fission yeast).